The chain runs to 516 residues: uncharacterized protein (516 aa).

A disordered region spans residues methionine 1 to glutamate 35. The segment covering aspartate 16–tyrosine 28 has biased composition (basic and acidic residues). A Phosphoserine modification is found at serine 31. Helical transmembrane passes span valine 77 to alanine 97, valine 111 to alanine 131, methionine 143 to isoleucine 163, valine 166 to glycine 186, glycine 198 to valine 218, tryptophan 231 to histidine 251, leucine 301 to isoleucine 321, serine 345 to phenylalanine 365, leucine 386 to threonine 406, isoleucine 412 to phenylalanine 432, isoleucine 439 to phenylalanine 461, and alanine 481 to leucine 501.

Belongs to the major facilitator superfamily.

The protein resides in the membrane. This is an uncharacterized protein from Schizosaccharomyces pombe (strain 972 / ATCC 24843) (Fission yeast).